Consider the following 2388-residue polypeptide: Hybrid signal transduction histidine kinase M (2388 aa).

Disordered stretches follow at residues 1–32, 42–61, 69–111, 123–209, 237–337, 361–421, 430–449, and 486–542; these read MSNY…NNFN, FNTP…NSIS, NECN…STPI, NRSN…NAYP, TLLN…SPKL, SPHG…YNDN, TRNT…SSSF, and IYTP…NNNE. The span at 69 to 82 shows a compositional bias: polar residues; the sequence is NECNSGGEQSPKIK. Low complexity-rich tracts occupy residues 83–110, 125–206, and 242–288; these read TNNN…KSTP, SNLN…SNSN, and SSNN…NNGG. A compositionally biased stretch (polar residues) spans 293–306; sequence QFISSDNKYNTVGN. Basic residues predominate over residues 309–322; that stretch reads HHHHHHQLHNHRHS. 4 stretches are compositionally biased toward low complexity: residues 325–337, 361–399, 410–419, and 432–449; these read QGSS…SPKL, SPHG…NQNN, NNSNDSFDYN, and NTGY…SSSF. A compositionally biased stretch (pro residues) spans 489-505; the sequence is PPYPQPYPQPPQLPPPS. The segment covering 506-541 has biased composition (low complexity); it reads SSSSLSKENDNVDNNNTNNNNNNNNNNNNNNNNNNN. The next 4 membrane-spanning stretches (helical) occupy residues 550–570, 589–609, 645–665, and 679–699; these read TMNL…FLMV, FILI…LLVV, YIFL…NLFF, and NIST…SHIP. The segment at 732–888 is disordered; that stretch reads NNDNKNKIND…NNNEEDDEEE (157 aa). Residues 735–744 show a composition bias toward basic and acidic residues; it reads NKNKINDKSD. Over residues 745–880 the composition is skewed to low complexity; it reads NSNSITNNNN…NNNNNNNNNN (136 aa). The next 3 membrane-spanning stretches (helical) occupy residues 896–916, 953–973, and 1025–1045; these read FQIF…LIVL, VQFQ…LLLV, and CSVG…WMSI. The region spanning 1093–1499 is the Histidine kinase domain; sequence RLVQNTGSII…VFELQVPMKC (407 aa). Residues 1236–1257 are compositionally biased toward basic residues; sequence PIHHHRHHHRHHHHHHHHHHHH. Residues 1236 to 1410 form a disordered region; it reads PIHHHRHHHR…INNNINNNNN (175 aa). Over residues 1260 to 1274 the composition is skewed to acidic residues; that stretch reads DDDDYDDDNDDDNNT. The span at 1286 to 1315 shows a compositional bias: basic and acidic residues; the sequence is LSDKIKDNQDENLELKKSNNDKIIENKENQ. Over residues 1316–1410 the composition is skewed to low complexity; the sequence is ENNNNNNNNN…INNNINNNNN (95 aa). In terms of domain architecture, Response regulatory 1 spans 1541–1656; sequence KILVIDDNPN…QLTVLSQLLP (116 aa). At aspartate 1592 the chain carries 4-aspartylphosphate. 5 disordered regions span residues 1666 to 1702, 1960 to 2022, 2036 to 2121, 2133 to 2183, and 2218 to 2256; these read SNQN…NIDF, GNNS…NSSN, CKGD…DIIN, QQQL…VKSS, and NQLN…NNND. Residues 1676–1696 show a composition bias toward gly residues; that stretch reads SNGGGGGGGGGGGGGGGGGSG. Residues 1974-1985 are compositionally biased toward low complexity; it reads TNNNTTTTTTTT. The segment covering 1986 to 2010 has biased composition (polar residues); it reads QPKKSPILTSSNGSDKSEGSTGSNR. Residues 2054–2064 show a composition bias toward low complexity; the sequence is DSSSSSSSSDS. The segment covering 2065 to 2076 has biased composition (basic and acidic residues); the sequence is HGQDDHSYRLED. Low complexity-rich tracts occupy residues 2078-2109 and 2133-2165; these read SISS…SGIN and QQQL…LPIP. Residues 2169 to 2183 show a composition bias toward polar residues; sequence INSSGASSGIKVKSS. Residues 2262–2383 form the Response regulatory 2 domain; it reads NILLVEDNLV…LLISLLKKLV (122 aa). The residue at position 2313 (aspartate 2313) is a 4-aspartylphosphate.

Post-translationally, activation probably requires transfer of a phosphate group between a histidine in the kinase core (transmitter) domain and an aspartate of the receiver domain.

Its subcellular location is the membrane. It carries out the reaction ATP + protein L-histidine = ADP + protein N-phospho-L-histidine.. Functionally, acts as a receptor histidine kinase for a signal transduction pathway. This protein undergoes an ATP-dependent autophosphorylation at a conserved histidine residue in the kinase core, and a phosphoryl group is then transferred to a conserved aspartate residue in the receiver domain. This Dictyostelium discoideum (Social amoeba) protein is Hybrid signal transduction histidine kinase M (dhkM).